Here is a 564-residue protein sequence, read N- to C-terminus: Kelch repeat and BTB domain-containing protein 1 (564 aa).

The region spanning cysteine 21 to asparagine 88 is the BTB domain. Residues cysteine 123 to serine 219 form the BACK domain. 6 Kelch repeats span residues isoleucine 252–asparagine 297, isoleucine 298–glutamate 346, tyrosine 347–glycine 395, isoleucine 397–glycine 441, lysine 442–asparagine 492, and leucine 494–isoleucine 539.

As to quaternary structure, interacts (via BTB domain) with host CUL3.

The protein resides in the host cytoplasm. Functionally, probable substrate-specific adapter of CUL3-containing E3 ubiquitin-protein ligases which mediate the ubiquitination and subsequent proteasomal degradation of host target proteins. This chain is Kelch repeat and BTB domain-containing protein 1 (KBTB1), found in Camelus.